Here is a 753-residue protein sequence, read N- to C-terminus: Probable TonB-dependent siderophore receptor PiuA (753 aa).

Positions 1-35 are cleaved as a signal peptide; it reads MSRQSTDTAVSSQRLLASAIGVAITAIAAPQAAQA. The TBDR plug domain maps to 79-185; sequence PLLDTPKTVT…TGGSLNLISK (107 aa). One can recognise a TBDR beta-barrel domain in the interval 190–753; sequence DNFTDAGFTW…TALLGVNFHF (564 aa). A disulfide bridge connects residues Cys420 and Cys430.

Belongs to the TonB-dependent receptor family.

It is found in the cell outer membrane. In terms of biological role, involved in the initial step of iron uptake by binding iron chelating siderophores, thereby allowing extraction of iron from the environment. Probably involved in the transport of siderophores, including host catecholamines such as dopamine. The sequence is that of Probable TonB-dependent siderophore receptor PiuA from Pseudomonas aeruginosa (strain ATCC 15692 / DSM 22644 / CIP 104116 / JCM 14847 / LMG 12228 / 1C / PRS 101 / PAO1).